The primary structure comprises 300 residues: PTB domain-containing engulfment adapter protein 1 (300 aa).

The PID domain maps to alanine 21 to leucine 176. Positions valine 160–valine 199 form a coiled coil.

It belongs to the ced-6 family.

It localises to the cytoplasm. Functionally, may function as an adapter protein. Required for efficient phagocytosis of apoptotic cells. May play a role in the internalization and endosomal trafficking of various lrp1 ligands. The sequence is that of PTB domain-containing engulfment adapter protein 1 (gulp1) from Danio rerio (Zebrafish).